We begin with the raw amino-acid sequence, 470 residues long: MNAATKLPGELGPIHFVGIGGIGMSGIAEVLMTLGYRVQGSDAKASKITERLVSLGATFFEGQRAGNLGEAAVVVISSAIKKGNPELEEARLRGLPVVRRAEMLAELMRMRSNIAIAGTHGKTTTTTMVATLLDKGGFDPTVINGGVIHAYGSNARAGAGEWMVVEADESDGSFNRLPATIAIVTNIDPEHMEHWGSFDALRKGFYDFVTNIPFYGLAVCCTDHAEVQALVGRVTDRRIVTFGFNAQADVRAINLRYENGIAHFDVALQSEGAGHVIEGMSLPMPGDHNVSNALAAVAVARHLGMKKDEIREALAAFGGVNRRFTKVGEVGGVTIIDDYGHHPVEIAAVLKAARQAVKGRVIAVHQPHRYSRLHSLFDDFCTCFNEADVVAIAEVYAAGEDPIPGAGRDDLVAGLIAHGHRHARAILCEDDLERLVREQARPGDMVVCLGAGTISAWANNLPARLMGKAA.

G118–T124 serves as a coordination point for ATP.

Belongs to the MurCDEF family.

The protein localises to the cytoplasm. The catalysed reaction is UDP-N-acetyl-alpha-D-muramate + L-alanine + ATP = UDP-N-acetyl-alpha-D-muramoyl-L-alanine + ADP + phosphate + H(+). The protein operates within cell wall biogenesis; peptidoglycan biosynthesis. In terms of biological role, cell wall formation. This Cereibacter sphaeroides (strain ATCC 17029 / ATH 2.4.9) (Rhodobacter sphaeroides) protein is UDP-N-acetylmuramate--L-alanine ligase.